Reading from the N-terminus, the 332-residue chain is Potassium channel subfamily K member 17 (332 aa).

The Cytoplasmic segment spans residues 1-20 (MYRPRARAAPEGRVRGCAVP). A helical membrane pass occupies residues 21-43 (STVLLLLAYLAYLALGTGVFWTL). N-linked (GlcNAc...) asparagine glycosylation is found at N65 and N94. The pore-forming intramembrane region spans 106 to 124 (SFFFSVSTITTIGYGNLSP). The K(+) site is built by T116, I117, G118, and Y119. Residues 116–121 (TIGYGN) are selectivity filter 1. Residues 128–148 (AARLFCIFFALVGIPLNLVVL) traverse the membrane as a helical segment. Residues 149-179 (NRLGHLMQQGVNHWASRLGGTWQDPDKARWL) are Cytoplasmic-facing. Residues 180–200 (AGSGALLSGLLLFLLLPPLLF) form a helical membrane-spanning segment. An intramembrane region (pore-forming) is located at residues 211–230 (GFYFAFITLSTVGFGDYVIG). 4 residues coordinate K(+): T221, V222, G223, and F224. Residues 221–226 (TVGFGD) form a selectivity filter 2 region. The helical transmembrane segment at 244–264 (MVSLWILFGMAWLALIIKLIL) threads the bilayer. At 265-332 (SQLETPGRVC…AHAAGCGKDS (68 aa)) the chain is on the cytoplasmic side. Residues 287 to 312 (SQSWRQGPDREPESHSPQQGCYPEGP) form a disordered region.

Belongs to the two pore domain potassium channel (TC 1.A.1.8) family. Homodimer; disulfide-linked. Heterodimer with KCNK5 and KCNK16. As to expression, widely expressed. Highly expressed in aorta and coronary artery. Expressed in pancreas, in both endocrine (alpha, beta, gamma, delta, and epsilon) and exocrine (acinar and ductal) cells.

Its subcellular location is the cell membrane. The catalysed reaction is K(+)(in) = K(+)(out). It catalyses the reaction Rb(+)(in) = Rb(+)(out). The enzyme catalyses Cs(+)(in) = Cs(+)(out). Inhibited by Ba(2+), quinidine, chloroform and halothane. Activated at alkaline pH. Activated by quinine and isoflurane. In terms of biological role, k(+) channel that conducts voltage-dependent outward rectifying currents upon membrane depolarization. Voltage sensing is coupled to K(+) electrochemical gradient in an 'ion flux gating' mode where outward but not inward ion flow opens the gate. Homo- and heterodimerizes to form functional channels with distinct regulatory and gating properties. Present in the cardiac conduction system where it may regulate action potential duration and beating frequency of cardiac myocytes. Permeable to other monovalent cations such as Rb(+) and Cs(+). The polypeptide is Potassium channel subfamily K member 17 (Homo sapiens (Human)).